We begin with the raw amino-acid sequence, 320 residues long: Aspartate carbamoyltransferase catalytic subunit (320 aa).

Positions 58 and 59 each coordinate carbamoyl phosphate. Position 86 (Lys86) interacts with L-aspartate. Arg108, His136, and Gln139 together coordinate carbamoyl phosphate. L-aspartate is bound by residues Arg169 and Arg223. Gly264 and Pro265 together coordinate carbamoyl phosphate.

The protein belongs to the aspartate/ornithine carbamoyltransferase superfamily. ATCase family. In terms of assembly, heterododecamer (2C3:3R2) of six catalytic PyrB chains organized as two trimers (C3), and six regulatory PyrI chains organized as three dimers (R2).

The catalysed reaction is carbamoyl phosphate + L-aspartate = N-carbamoyl-L-aspartate + phosphate + H(+). Its pathway is pyrimidine metabolism; UMP biosynthesis via de novo pathway; (S)-dihydroorotate from bicarbonate: step 2/3. In terms of biological role, catalyzes the condensation of carbamoyl phosphate and aspartate to form carbamoyl aspartate and inorganic phosphate, the committed step in the de novo pyrimidine nucleotide biosynthesis pathway. This chain is Aspartate carbamoyltransferase catalytic subunit, found in Cereibacter sphaeroides (strain ATCC 17029 / ATH 2.4.9) (Rhodobacter sphaeroides).